The primary structure comprises 358 residues: Phosphoserine aminotransferase (358 aa).

Arg41 contacts L-glutamate. Residues 75-76 (AS), Trp100, Thr148, Asp167, and Gln190 contribute to the pyridoxal 5'-phosphate site. Position 191 is an N6-(pyridoxal phosphate)lysine (Lys191). A pyridoxal 5'-phosphate-binding site is contributed by 233–234 (NT).

It belongs to the class-V pyridoxal-phosphate-dependent aminotransferase family. SerC subfamily. As to quaternary structure, homodimer. Pyridoxal 5'-phosphate serves as cofactor.

Its subcellular location is the cytoplasm. It catalyses the reaction O-phospho-L-serine + 2-oxoglutarate = 3-phosphooxypyruvate + L-glutamate. It carries out the reaction 4-(phosphooxy)-L-threonine + 2-oxoglutarate = (R)-3-hydroxy-2-oxo-4-phosphooxybutanoate + L-glutamate. Its pathway is amino-acid biosynthesis; L-serine biosynthesis; L-serine from 3-phospho-D-glycerate: step 2/3. It functions in the pathway cofactor biosynthesis; pyridoxine 5'-phosphate biosynthesis; pyridoxine 5'-phosphate from D-erythrose 4-phosphate: step 3/5. In terms of biological role, catalyzes the reversible conversion of 3-phosphohydroxypyruvate to phosphoserine and of 3-hydroxy-2-oxo-4-phosphonooxybutanoate to phosphohydroxythreonine. This Campylobacter jejuni subsp. jejuni serotype O:2 (strain ATCC 700819 / NCTC 11168) protein is Phosphoserine aminotransferase.